The chain runs to 463 residues: ATP-dependent protease ATPase subunit HslU (463 aa).

ATP-binding positions include Val-21, 63 to 68, Asp-276, Glu-341, and Arg-413; that span reads GVGKTE.

It belongs to the ClpX chaperone family. HslU subfamily. In terms of assembly, a double ring-shaped homohexamer of HslV is capped on each side by a ring-shaped HslU homohexamer. The assembly of the HslU/HslV complex is dependent on binding of ATP.

The protein localises to the cytoplasm. Functionally, ATPase subunit of a proteasome-like degradation complex; this subunit has chaperone activity. The binding of ATP and its subsequent hydrolysis by HslU are essential for unfolding of protein substrates subsequently hydrolyzed by HslV. HslU recognizes the N-terminal part of its protein substrates and unfolds these before they are guided to HslV for hydrolysis. This chain is ATP-dependent protease ATPase subunit HslU, found in Thermotoga neapolitana (strain ATCC 49049 / DSM 4359 / NBRC 107923 / NS-E).